The primary structure comprises 520 residues: Glutamate--cysteine ligase (520 aa).

Belongs to the glutamate--cysteine ligase type 1 family. Type 1 subfamily.

It catalyses the reaction L-cysteine + L-glutamate + ATP = gamma-L-glutamyl-L-cysteine + ADP + phosphate + H(+). It participates in sulfur metabolism; glutathione biosynthesis; glutathione from L-cysteine and L-glutamate: step 1/2. The sequence is that of Glutamate--cysteine ligase from Sodalis glossinidius (strain morsitans).